The following is a 467-amino-acid chain: Transcriptional regulator of yeast form adherence 6 (467 aa).

Polar residues predominate over residues Asn-43–Thr-52. 5 disordered regions span residues Asn-43–Ser-83, Gly-128–Asn-149, Glu-245–Ser-275, Asn-312–Lys-365, and Ser-390–Arg-439. Positions Glu-92–Leu-173 constitute a bHLH domain. Low complexity-rich tracts occupy residues Val-257 to Ser-275 and Asn-312 to Asn-322. The segment covering Pro-323 to Pro-338 has biased composition (polar residues). A compositionally biased stretch (low complexity) spans Ser-345–Lys-365. Positions Gly-417 to Asp-432 are enriched in polar residues.

Its subcellular location is the nucleus. Its function is as follows. Transcription factor required for yeast cell adherence to silicone substrate. This chain is Transcriptional regulator of yeast form adherence 6 (TRY6), found in Candida albicans (strain SC5314 / ATCC MYA-2876) (Yeast).